Here is a 31-residue protein sequence, read N- to C-terminus: QRQCERLRDCYKYCMSPKRCTYGTCYCEPSP.

Position 1 is a pyrrolidone carboxylic acid (glutamine 1). 3 disulfides stabilise this stretch: cysteine 4-cysteine 20, cysteine 10-cysteine 25, and cysteine 14-cysteine 27. Proline 31 carries the proline amide modification.

Belongs to the short scorpion toxin superfamily. Potassium channel inhibitor family. Alpha-KTx 17 subfamily. Post-translationally, the N-terminus is blocked. In terms of tissue distribution, expressed by the venom gland.

It localises to the secreted. In terms of biological role, blocker of potassium channels (Kv). This chain is Toxin BmKK16, found in Olivierus martensii (Manchurian scorpion).